A 129-amino-acid chain; its full sequence is Phosphoribosyl-AMP cyclohydrolase (129 aa).

Mg(2+) is bound at residue Asp-76. Residue Cys-77 coordinates Zn(2+). Mg(2+) is bound by residues Asp-78 and Asp-80. 2 residues coordinate Zn(2+): Cys-97 and Cys-104.

The protein belongs to the PRA-CH family. As to quaternary structure, homodimer. Requires Mg(2+) as cofactor. Zn(2+) serves as cofactor.

It is found in the cytoplasm. The catalysed reaction is 1-(5-phospho-beta-D-ribosyl)-5'-AMP + H2O = 1-(5-phospho-beta-D-ribosyl)-5-[(5-phospho-beta-D-ribosylamino)methylideneamino]imidazole-4-carboxamide. It functions in the pathway amino-acid biosynthesis; L-histidine biosynthesis; L-histidine from 5-phospho-alpha-D-ribose 1-diphosphate: step 3/9. Its function is as follows. Catalyzes the hydrolysis of the adenine ring of phosphoribosyl-AMP. The chain is Phosphoribosyl-AMP cyclohydrolase from Methylibium petroleiphilum (strain ATCC BAA-1232 / LMG 22953 / PM1).